A 255-amino-acid chain; its full sequence is uncharacterized protein (255 aa).

The first 28 residues, 1 to 28 (MFKLNFKNNYKVLTLLFSLTLSMFVSNA), serve as a signal peptide directing secretion. N38, N61, and N83 each carry an N-linked (GlcNAc...) asparagine glycan.

It is found in the secreted. This is an uncharacterized protein from Dictyostelium discoideum (Social amoeba).